The sequence spans 188 residues: Protein GrpE (188 aa).

Residues 1–16 (MEERNEQVVEEVKEAQ) show a composition bias toward basic and acidic residues. Positions 1 to 31 (MEERNEQVVEEVKEAQVEEAVTPENSEETVE) are disordered.

This sequence belongs to the GrpE family. In terms of assembly, homodimer.

It localises to the cytoplasm. Participates actively in the response to hyperosmotic and heat shock by preventing the aggregation of stress-denatured proteins, in association with DnaK and GrpE. It is the nucleotide exchange factor for DnaK and may function as a thermosensor. Unfolded proteins bind initially to DnaJ; upon interaction with the DnaJ-bound protein, DnaK hydrolyzes its bound ATP, resulting in the formation of a stable complex. GrpE releases ADP from DnaK; ATP binding to DnaK triggers the release of the substrate protein, thus completing the reaction cycle. Several rounds of ATP-dependent interactions between DnaJ, DnaK and GrpE are required for fully efficient folding. This chain is Protein GrpE, found in Bacillus anthracis.